The following is a 273-amino-acid chain: MSCEELEIVWNNIKAEARTLADCEPMLASFYHATLLKHENLGSALSYMLANKLSSPIMPAIAIREVVEEAYAADPEMIASAACDIQAVRTRDPAVDKYSTPLLYLKGFHALQAYRIGHWLWNQGRRALAIFLQNQVSVTFQVDIHPAAKIGRGIMLDHATGIVVGETAVIENDVSILQSVTLGGTGKSGGDRHPKIREGVMIGAGAKILGNIEVGRGAKIGAGSVVLQPVPPHTTAAGVPARIVGKPDSDKPSMDMDQHFNGINHTFEYGDGI.

The protein belongs to the transferase hexapeptide repeat family. In terms of assembly, homohexamer. Dimer of a homotrimer.

The protein localises to the cytoplasm. The enzyme catalyses L-serine + acetyl-CoA = O-acetyl-L-serine + CoA. It participates in amino-acid biosynthesis; L-cysteine biosynthesis; L-cysteine from L-serine: step 1/2. The chain is Serine acetyltransferase (cysE) from Shigella flexneri.